The following is a 301-amino-acid chain: uncharacterized protein (301 aa).

It belongs to the asfivirus E301R family. As to quaternary structure, interacts with host IRF3.

Functionally, plays a role in the inhibition of host innate immune system by acting as a negatively regulator of type I interferon production. Mechanistically, interacts with and prevents host IRF3 nuclear localization to inhibit its transcriptional activity. This is an uncharacterized protein from Ornithodoros (relapsing fever ticks).